Here is a 419-residue protein sequence, read N- to C-terminus: Creatine kinase S-type, mitochondrial (419 aa).

The N-terminal 39 residues, 1–39 (MASTFSKLLTGRNASLLFATLGTGALTTGYLLNKQNVCA), are a transit peptide targeting the mitochondrion. The tract at residues 40-64 (AAREQHKLFPPSADYPDLRKHNNCM) is cardiolipin-binding. The region spanning 46–132 (KLFPPSADYP…FDPVIKLRHN (87 aa)) is the Phosphagen kinase N-terminal domain. The region spanning 159 to 401 (YVLSSRVRTG…NYLVDCEKKL (243 aa)) is the Phosphagen kinase C-terminal domain. Residues 162–166 (SSRVR) and His-225 each bind ATP. Tyr-255 is subject to Phosphotyrosine. ATP is bound by residues Arg-270, Arg-326, 354-359 (RGTGGV), and Asp-369. Thr-356 carries the phosphothreonine modification.

The protein belongs to the ATP:guanido phosphotransferase family. Exists as an octamer composed of four CKMT2 homodimers.

The protein localises to the mitochondrion inner membrane. It carries out the reaction creatine + ATP = N-phosphocreatine + ADP + H(+). Reversibly catalyzes the transfer of phosphate between ATP and various phosphogens (e.g. creatine phosphate). Creatine kinase isoenzymes play a central role in energy transduction in tissues with large, fluctuating energy demands, such as skeletal muscle, heart, brain and spermatozoa. In Bos taurus (Bovine), this protein is Creatine kinase S-type, mitochondrial (CKMT2).